A 176-amino-acid polypeptide reads, in one-letter code: Large ribosomal subunit protein uL6 (176 aa).

This sequence belongs to the universal ribosomal protein uL6 family. As to quaternary structure, part of the 50S ribosomal subunit.

This protein binds to the 23S rRNA, and is important in its secondary structure. It is located near the subunit interface in the base of the L7/L12 stalk, and near the tRNA binding site of the peptidyltransferase center. The polypeptide is Large ribosomal subunit protein uL6 (Lactobacillus delbrueckii subsp. bulgaricus (strain ATCC 11842 / DSM 20081 / BCRC 10696 / JCM 1002 / NBRC 13953 / NCIMB 11778 / NCTC 12712 / WDCM 00102 / Lb 14)).